The sequence spans 163 residues: 2-C-methyl-D-erythritol 2,4-cyclodiphosphate synthase (163 aa).

A divalent metal cation contacts are provided by Asp15 and His17. 4-CDP-2-C-methyl-D-erythritol 2-phosphate is bound by residues 15-17 (DFH) and 41-42 (HS). His49 is an a divalent metal cation binding site. 4-CDP-2-C-methyl-D-erythritol 2-phosphate contacts are provided by residues 63–65 (DIG) and 139–142 (TTNE).

It belongs to the IspF family. In terms of assembly, homotrimer. Requires a divalent metal cation as cofactor.

The catalysed reaction is 4-CDP-2-C-methyl-D-erythritol 2-phosphate = 2-C-methyl-D-erythritol 2,4-cyclic diphosphate + CMP. It participates in isoprenoid biosynthesis; isopentenyl diphosphate biosynthesis via DXP pathway; isopentenyl diphosphate from 1-deoxy-D-xylulose 5-phosphate: step 4/6. Functionally, involved in the biosynthesis of isopentenyl diphosphate (IPP) and dimethylallyl diphosphate (DMAPP), two major building blocks of isoprenoid compounds. Catalyzes the conversion of 4-diphosphocytidyl-2-C-methyl-D-erythritol 2-phosphate (CDP-ME2P) to 2-C-methyl-D-erythritol 2,4-cyclodiphosphate (ME-CPP) with a corresponding release of cytidine 5-monophosphate (CMP). The sequence is that of 2-C-methyl-D-erythritol 2,4-cyclodiphosphate synthase from Gloeobacter violaceus (strain ATCC 29082 / PCC 7421).